A 622-amino-acid chain; its full sequence is Microtubule-associated protein 70-1 (622 aa).

Residues 1 to 27 (MSDVSADGGFLSAEQATTPVAIPTPYP) are disordered. A coiled-coil region spans residues 66–365 (DPVKVELNRL…LAISDRAAKS (300 aa)). A required for targeting to microtubules region spans residues 250–483 (ILDRMHRQKV…YSFNKACDET (234 aa)). Disordered regions lie at residues 388–512 (SSIS…TEDN) and 579–622 (AAMR…RSTQ). Polar residues-rich tracts occupy residues 400-425 (SMSNGPSRRQSIGGSDNLQKFASNGF) and 432-453 (MRNSFTSNSTSVLKNAKGTSKS). Composition is skewed to basic and acidic residues over residues 479 to 501 (ACDETKESESPNTWKEDSEEKPP) and 579 to 591 (AAMRVDKDQDNRA). Residues 541 to 590 (DKDDAIEMLAKKVETLTKAMEVEAKKMRREVAAMEKEVAAMRVDKDQDNR) are a coiled coil. Positions 594–605 (SSNTKPSSNTAQ) are enriched in polar residues.

This sequence belongs to the MAP70 family. In terms of assembly, interacts with MAP70.5 and itself.

The protein resides in the cytoplasm. Its subcellular location is the cytoskeleton. The protein localises to the phragmoplast. It is found in the spindle. Plant-specific protein that interact with microtubules. In association with MAP70.5, is essential for the normal banding pattern of secondary cell wall and for the proper development of xylem tracheary elements and wood formation. This is Microtubule-associated protein 70-1 (MAP70.1) from Arabidopsis thaliana (Mouse-ear cress).